Here is a 674-residue protein sequence, read N- to C-terminus: Probable L-type lectin-domain containing receptor kinase II.1 (674 aa).

A signal peptide spans 1–24 (MAGVLGSVVFWLIIGIHVTFLVFA). At 25–301 (QEGDHFVYYD…PSPKRFPLKE (277 aa)) the chain is on the extracellular side. The legume-lectin like stretch occupies residues 28-274 (DHFVYYDFRN…NQYILGWSFK (247 aa)). N-linked (GlcNAc...) asparagine glycans are attached at residues Asn57, Asn117, Asn133, Asn185, Asn210, and Asn242. A helical transmembrane segment spans residues 302–322 (VLGATISTIAFLTLGGIVYLY). Over 323-674 (KKKKYAEVLE…EDVTVLFGGR (352 aa)) the chain is Cytoplasmic. The Protein kinase domain occupies 355 to 633 (FRENQLLGAG…LEGNVSVPAI (279 aa)). Residues 361–369 (LGAGGFGKV) and Lys383 contribute to the ATP site. Asp480 acts as the Proton acceptor in catalysis.

In the C-terminal section; belongs to the protein kinase superfamily. Ser/Thr protein kinase family. This sequence in the N-terminal section; belongs to the leguminous lectin family.

It is found in the cell membrane. It carries out the reaction L-seryl-[protein] + ATP = O-phospho-L-seryl-[protein] + ADP + H(+). It catalyses the reaction L-threonyl-[protein] + ATP = O-phospho-L-threonyl-[protein] + ADP + H(+). The polypeptide is Probable L-type lectin-domain containing receptor kinase II.1 (LECRK21) (Arabidopsis thaliana (Mouse-ear cress)).